The following is a 179-amino-acid chain: Dual-action ribosomal maturation protein DarP (179 aa).

The protein belongs to the DarP family.

The protein localises to the cytoplasm. Its function is as follows. Member of a network of 50S ribosomal subunit biogenesis factors which assembles along the 30S-50S interface, preventing incorrect 23S rRNA structures from forming. Promotes peptidyl transferase center (PTC) maturation. This Erwinia tasmaniensis (strain DSM 17950 / CFBP 7177 / CIP 109463 / NCPPB 4357 / Et1/99) protein is Dual-action ribosomal maturation protein DarP.